A 121-amino-acid polypeptide reads, in one-letter code: Putative RNase MJ0127 (121 aa).

Active-site residues include R76 and H81. An RX(4)HXY motif motif is present at residues 76 to 83; it reads RDKLIHHY. Y83 is subject to O-di-AMP-tyrosine.

This sequence belongs to the HepT RNase toxin family. As to quaternary structure, homodimer, probably forms a complex with cognate antitoxin MJ0128. In terms of processing, modified by cognate antitoxin MJ0128; probably at least 2 successive AMPylation events occur on Tyr-83.

Functionally, probable toxic component of a putative type VII toxin-antitoxin (TA) system, probably an RNase. Probably neutralized by cognate antitoxin MJ0128. Neutralization may be due to AMPylation by MJ0128. The polypeptide is Putative RNase MJ0127 (Methanocaldococcus jannaschii (strain ATCC 43067 / DSM 2661 / JAL-1 / JCM 10045 / NBRC 100440) (Methanococcus jannaschii)).